The following is a 180-amino-acid chain: Cytidylate kinase (180 aa).

Residue 7 to 15 (GLPGSGTTT) participates in ATP binding.

Belongs to the cytidylate kinase family. Type 2 subfamily.

It localises to the cytoplasm. It catalyses the reaction CMP + ATP = CDP + ADP. It carries out the reaction dCMP + ATP = dCDP + ADP. The protein is Cytidylate kinase of Methanosarcina barkeri (strain Fusaro / DSM 804).